A 422-amino-acid chain; its full sequence is Tyrosine--tRNA ligase (422 aa).

Tyrosine 35 contacts L-tyrosine. Positions 40–49 (PTADSLHIGH) match the 'HIGH' region motif. Positions 170 and 174 each coordinate L-tyrosine. Residues 232-236 (KFGKT) carry the 'KMSKS' region motif. Lysine 235 provides a ligand contact to ATP. One can recognise an S4 RNA-binding domain in the interval 355–421 (LTLVDLLVES…GKKKYFLVTY (67 aa)).

It belongs to the class-I aminoacyl-tRNA synthetase family. TyrS type 1 subfamily. Homodimer.

It localises to the cytoplasm. The enzyme catalyses tRNA(Tyr) + L-tyrosine + ATP = L-tyrosyl-tRNA(Tyr) + AMP + diphosphate + H(+). Catalyzes the attachment of tyrosine to tRNA(Tyr) in a two-step reaction: tyrosine is first activated by ATP to form Tyr-AMP and then transferred to the acceptor end of tRNA(Tyr). This is Tyrosine--tRNA ligase from Bacillus pumilus (strain SAFR-032).